The sequence spans 341 residues: Phosphate acyltransferase (341 aa).

It belongs to the PlsX family. As to quaternary structure, homodimer. Probably interacts with PlsY.

The protein resides in the cytoplasm. The catalysed reaction is a fatty acyl-[ACP] + phosphate = an acyl phosphate + holo-[ACP]. The protein operates within lipid metabolism; phospholipid metabolism. Catalyzes the reversible formation of acyl-phosphate (acyl-PO(4)) from acyl-[acyl-carrier-protein] (acyl-ACP). This enzyme utilizes acyl-ACP as fatty acyl donor, but not acyl-CoA. This is Phosphate acyltransferase from Vibrio cholerae serotype O1 (strain ATCC 39541 / Classical Ogawa 395 / O395).